Reading from the N-terminus, the 325-residue chain is DNA-directed RNA polymerase subunit alpha (325 aa).

Residues M1 to E231 form an alpha N-terminal domain (alpha-NTD) region. Positions V246 to K325 are alpha C-terminal domain (alpha-CTD).

This sequence belongs to the RNA polymerase alpha chain family. Homodimer. The RNAP catalytic core consists of 2 alpha, 1 beta, 1 beta' and 1 omega subunit. When a sigma factor is associated with the core the holoenzyme is formed, which can initiate transcription.

It catalyses the reaction RNA(n) + a ribonucleoside 5'-triphosphate = RNA(n+1) + diphosphate. DNA-dependent RNA polymerase catalyzes the transcription of DNA into RNA using the four ribonucleoside triphosphates as substrates. This is DNA-directed RNA polymerase subunit alpha from Janthinobacterium sp. (strain Marseille) (Minibacterium massiliensis).